The chain runs to 297 residues: Homoserine kinase (297 aa).

82 to 92 (PLTRGLGSSAS) contacts ATP.

Belongs to the GHMP kinase family. Homoserine kinase subfamily.

It localises to the cytoplasm. The enzyme catalyses L-homoserine + ATP = O-phospho-L-homoserine + ADP + H(+). Its pathway is amino-acid biosynthesis; L-threonine biosynthesis; L-threonine from L-aspartate: step 4/5. Catalyzes the ATP-dependent phosphorylation of L-homoserine to L-homoserine phosphate. This is Homoserine kinase from Bacillus anthracis (strain CDC 684 / NRRL 3495).